Here is a 158-residue protein sequence, read N- to C-terminus: Urease accessory protein UreE (158 aa).

The interval 133–158 is disordered; it reads PEGGAYQAHSHDGHSHHQGHTHDHHD. Over residues 141–158 the composition is skewed to basic and acidic residues; sequence HSHDGHSHHQGHTHDHHD.

It belongs to the UreE family.

It is found in the cytoplasm. Functionally, involved in urease metallocenter assembly. Binds nickel. Probably functions as a nickel donor during metallocenter assembly. This Chelativorans sp. (strain BNC1) protein is Urease accessory protein UreE.